The primary structure comprises 341 residues: S-adenosylmethionine:tRNA ribosyltransferase-isomerase (341 aa).

This sequence belongs to the QueA family. In terms of assembly, monomer.

Its subcellular location is the cytoplasm. It carries out the reaction 7-aminomethyl-7-carbaguanosine(34) in tRNA + S-adenosyl-L-methionine = epoxyqueuosine(34) in tRNA + adenine + L-methionine + 2 H(+). It functions in the pathway tRNA modification; tRNA-queuosine biosynthesis. Transfers and isomerizes the ribose moiety from AdoMet to the 7-aminomethyl group of 7-deazaguanine (preQ1-tRNA) to give epoxyqueuosine (oQ-tRNA). The sequence is that of S-adenosylmethionine:tRNA ribosyltransferase-isomerase from Caldanaerobacter subterraneus subsp. tengcongensis (strain DSM 15242 / JCM 11007 / NBRC 100824 / MB4) (Thermoanaerobacter tengcongensis).